Reading from the N-terminus, the 160-residue chain is uncharacterized protein (160 aa).

This is an uncharacterized protein from Mycobacterium tuberculosis (strain ATCC 25618 / H37Rv).